The chain runs to 255 residues: CDP-diacylglycerol pyrophosphatase (255 aa).

The chain crosses the membrane as a helical span at residues 5 to 27; that stretch reads LLITVALIAVLALTTLVAWRYLF.

The protein belongs to the Cdh family.

It is found in the cell inner membrane. It catalyses the reaction a CDP-1,2-diacyl-sn-glycerol + H2O = a 1,2-diacyl-sn-glycero-3-phosphate + CMP + 2 H(+). The protein operates within phospholipid metabolism; CDP-diacylglycerol degradation; phosphatidate from CDP-diacylglycerol: step 1/1. The sequence is that of CDP-diacylglycerol pyrophosphatase from Cronobacter sakazakii (strain ATCC BAA-894) (Enterobacter sakazakii).